A 92-amino-acid polypeptide reads, in one-letter code: Protein S100-A12 (92 aa).

EF-hand domains follow at residues 13–48 (NIFH…IKNI) and 49–84 (KDKA…ALKA). His16 contributes to the Cu cation binding site. His16 contacts Zn(2+). 3 residues coordinate Ca(2+): Ser19, Lys22, and His24. A Cu cation-binding site is contributed by Asp26. Residue Asp26 coordinates Zn(2+). Ca(2+)-binding residues include Thr27 and Glu32. Positions 38 to 53 (TKELANTIKNIKDKAV) are hinge domain. Ca(2+)-binding residues include Asp62, Asn64, Asp66, Gln68, and Glu73. Cu cation contacts are provided by His86 and His90. Positions 86 and 90 each coordinate Zn(2+).

This sequence belongs to the S-100 family. In terms of assembly, homodimer. Homooligomer (tetramer or hexamer) in the presence of calcium, zinc and copper ions. Interacts with AGER and both calcium and zinc are essential for the interaction. Interacts with CACYBP in a calcium-dependent manner. As to expression, predominantly expressed by neutrophils, monocytes and activated macrophages. Expressed by eosinophils and macrophages in asthmatic airways in regions where mast cells accumulate. Found in high concentrations in the serum of patients suffering from various inflammatory disorders, such as rheumatoid arthritis, psoriatic arthritis, Crohn's disease, ulcerative colitis, and Kawasaki disease.

It localises to the secreted. It is found in the cytoplasm. The protein resides in the cytoskeleton. The protein localises to the cell membrane. Its function is as follows. S100A12 is a calcium-, zinc- and copper-binding protein which plays a prominent role in the regulation of inflammatory processes and immune response. Its pro-inflammatory activity involves recruitment of leukocytes, promotion of cytokine and chemokine production, and regulation of leukocyte adhesion and migration. Acts as an alarmin or a danger associated molecular pattern (DAMP) molecule and stimulates innate immune cells via binding to receptor for advanced glycation endproducts (AGER). Binding to AGER activates the MAP-kinase and NF-kappa-B signaling pathways leading to production of pro-inflammatory cytokines and up-regulation of cell adhesion molecules ICAM1 and VCAM1. Acts as a monocyte and mast cell chemoattractant. Can stimulate mast cell degranulation and activation which generates chemokines, histamine and cytokines inducing further leukocyte recruitment to the sites of inflammation. Can inhibit the activity of matrix metalloproteinases; MMP2, MMP3 and MMP9 by chelating Zn(2+) from their active sites. Possesses filariacidal and filariastatic activity. Calcitermin possesses antifungal activity against C.albicans and is also active against E.coli and P.aeruginosa but not L.monocytogenes and S.aureus. In Homo sapiens (Human), this protein is Protein S100-A12 (S100A12).